The chain runs to 353 residues: Photosystem II protein D1 (353 aa).

Threonine 2 carries the N-acetylthreonine modification. Threonine 2 carries the phosphothreonine modification. 3 helical membrane passes run 29–46 (YIGWFGVLMIPTLLTATS), 118–133 (HFLLGVACYMGREWEL), and 142–156 (WIAVAYSAPVAAATA). Histidine 118 provides a ligand contact to chlorophyll a. Tyrosine 126 contacts pheophytin a. [CaMn4O5] cluster is bound by residues aspartate 170 and glutamate 189. Residues 197-218 (FHMLGVAGVFGGSLFSAMHGSL) form a helical membrane-spanning segment. Position 198 (histidine 198) interacts with chlorophyll a. A quinone is bound by residues histidine 215 and 264–265 (SF). Residue histidine 215 participates in Fe cation binding. Histidine 272 contacts Fe cation. A helical transmembrane segment spans residues 274-288 (FLAAWPVVGIWFTAL). Residues histidine 332, glutamate 333, aspartate 342, and alanine 344 each coordinate [CaMn4O5] cluster. The propeptide occupies 345–353 (AVEAPSING).

The protein belongs to the reaction center PufL/M/PsbA/D family. PSII is composed of 1 copy each of membrane proteins PsbA, PsbB, PsbC, PsbD, PsbE, PsbF, PsbH, PsbI, PsbJ, PsbK, PsbL, PsbM, PsbT, PsbX, PsbY, PsbZ, Psb30/Ycf12, at least 3 peripheral proteins of the oxygen-evolving complex and a large number of cofactors. It forms dimeric complexes. Requires The D1/D2 heterodimer binds P680, chlorophylls that are the primary electron donor of PSII, and subsequent electron acceptors. It shares a non-heme iron and each subunit binds pheophytin, quinone, additional chlorophylls, carotenoids and lipids. D1 provides most of the ligands for the Mn4-Ca-O5 cluster of the oxygen-evolving complex (OEC). There is also a Cl(-1) ion associated with D1 and D2, which is required for oxygen evolution. The PSII complex binds additional chlorophylls, carotenoids and specific lipids. as cofactor. In terms of processing, tyr-161 forms a radical intermediate that is referred to as redox-active TyrZ, YZ or Y-Z. Post-translationally, C-terminally processed by CTPA; processing is essential to allow assembly of the oxygen-evolving complex and thus photosynthetic growth.

The protein localises to the plastid. It is found in the chloroplast thylakoid membrane. It carries out the reaction 2 a plastoquinone + 4 hnu + 2 H2O = 2 a plastoquinol + O2. In terms of biological role, this is one of the two reaction center proteins of photosystem II. Photosystem II (PSII) is a light-driven water:plastoquinone oxidoreductase that uses light energy to abstract electrons from H(2)O, generating O(2) and a proton gradient subsequently used for ATP formation. It consists of a core antenna complex that captures photons, and an electron transfer chain that converts photonic excitation into a charge separation. The D1/D2 (PsbA/PsbD) reaction center heterodimer binds P680, the primary electron donor of PSII as well as several subsequent electron acceptors. In Pisum sativum (Garden pea), this protein is Photosystem II protein D1.